Reading from the N-terminus, the 124-residue chain is Non-specific lipid-transfer protein (124 aa).

An N-terminal signal peptide occupies residues 1–26 (MANSGVMKLVCLVLACMVVAAPLAEA). 4 disulfides stabilise this stretch: Cys30–Cys77, Cys40–Cys54, Cys55–Cys100, and Cys75–Cys114.

It belongs to the plant LTP family.

Plant non-specific lipid-transfer proteins transfer phospholipids as well as galactolipids across membranes. May play a role in wax or cutin deposition in the cell walls of expanding epidermal cells and certain secretory tissues. This Macadamia integrifolia (Macadamia nut) protein is Non-specific lipid-transfer protein.